Consider the following 525-residue polypeptide: GMP synthase [glutamine-hydrolyzing] (525 aa).

Positions 8–207 (KILILDFGSQ…ALDICGCAAN (200 aa)) constitute a Glutamine amidotransferase type-1 domain. Cysteine 85 serves as the catalytic Nucleophile. Catalysis depends on residues histidine 181 and glutamate 183. Residues 208–400 (WKPSSIIEDA…LGLPYNMLYR (193 aa)) form the GMPS ATP-PPase domain. 235-241 (SGGVDSS) contacts ATP.

Homodimer.

The catalysed reaction is XMP + L-glutamine + ATP + H2O = GMP + L-glutamate + AMP + diphosphate + 2 H(+). Its pathway is purine metabolism; GMP biosynthesis; GMP from XMP (L-Gln route): step 1/1. In terms of biological role, catalyzes the synthesis of GMP from XMP. In Shewanella oneidensis (strain ATCC 700550 / JCM 31522 / CIP 106686 / LMG 19005 / NCIMB 14063 / MR-1), this protein is GMP synthase [glutamine-hydrolyzing].